The sequence spans 266 residues: Phosphatidate cytidylyltransferase (266 aa).

The next 8 helical transmembrane spans lie at 16 to 36, 52 to 72, 78 to 98, 101 to 121, 125 to 145, 164 to 184, 186 to 206, and 237 to 257; these read VVLIVVAGLILYADNLLLFWA, LFQVKASFSLYLILVLSWVAA, PVECALISAMVMASVIAYQKA, SEAILPFLYPGVGFFALFGVY, GAVAIIWLLVVVVASDVGAFF, LEGALIGVVLASVLGSFVGMG, LSGGFLMALLFSFLIALMAVF, and LDSMLFGALSLHVLLYFLEIW.

It belongs to the CDS family.

Its subcellular location is the cell inner membrane. It catalyses the reaction a 1,2-diacyl-sn-glycero-3-phosphate + CTP + H(+) = a CDP-1,2-diacyl-sn-glycerol + diphosphate. Its pathway is phospholipid metabolism; CDP-diacylglycerol biosynthesis; CDP-diacylglycerol from sn-glycerol 3-phosphate: step 3/3. The protein is Phosphatidate cytidylyltransferase (cdsA) of Helicobacter pylori (strain J99 / ATCC 700824) (Campylobacter pylori J99).